Consider the following 151-residue polypeptide: Large-conductance mechanosensitive channel (151 aa).

The next 3 helical transmembrane spans lie at 14–34 (VVDM…VNTL), 38–58 (VLMP…LYLI), and 86–106 (GLFL…FLLV).

The protein belongs to the MscL family. As to quaternary structure, homopentamer.

It localises to the cell inner membrane. Channel that opens in response to stretch forces in the membrane lipid bilayer. May participate in the regulation of osmotic pressure changes within the cell. This chain is Large-conductance mechanosensitive channel, found in Pelodictyon phaeoclathratiforme (strain DSM 5477 / BU-1).